The following is a 229-amino-acid chain: 2,3-bisphosphoglycerate-dependent phosphoglycerate mutase (229 aa).

Substrate contacts are provided by residues 7-14 (RHGQSEWN), 20-21 (TG), Arg59, 86-89 (ERHY), Lys97, 113-114 (RR), and 182-183 (GN). His8 acts as the Tele-phosphohistidine intermediate in catalysis. Glu86 functions as the Proton donor/acceptor in the catalytic mechanism.

This sequence belongs to the phosphoglycerate mutase family. BPG-dependent PGAM subfamily.

The enzyme catalyses (2R)-2-phosphoglycerate = (2R)-3-phosphoglycerate. Its pathway is carbohydrate degradation; glycolysis; pyruvate from D-glyceraldehyde 3-phosphate: step 3/5. In terms of biological role, catalyzes the interconversion of 2-phosphoglycerate and 3-phosphoglycerate. This Listeria welshimeri serovar 6b (strain ATCC 35897 / DSM 20650 / CCUG 15529 / CIP 8149 / NCTC 11857 / SLCC 5334 / V8) protein is 2,3-bisphosphoglycerate-dependent phosphoglycerate mutase.